Here is a 758-residue protein sequence, read N- to C-terminus: Transmembrane E3 ubiquitin-protein ligase 1 (758 aa).

The signal sequence occupies residues 1 to 26; that stretch reads MEIDGNTLVFIIVILFLFFSSPGGDG. The Lumenal segment spans residues 27 to 398; it reads VSSQYEFNQL…YELKIMSIRK (372 aa). The helical transmembrane segment at 399–419 threads the bilayer; that stretch reads HLLFGIALFAAQIYLLLTQMH. Over 420–431 the chain is Cytoplasmic; that stretch reads HTNTPSMVNKIS. A helical transmembrane segment spans residues 432–452; it reads FYCFSMINLVDGSLATLYFVA. Residues 453-458 lie on the Lumenal side of the membrane; that stretch reads ASVVPE. Residues 459–479 traverse the membrane as a helical segment; it reads LYLPLVISAFSCFILASIFEI. At 480-523 the chain is on the cytoplasmic side; it reads RYLISIYASQVNEQNVGIINLLRGNTGTYDENRPRPAFIPDEGS. A helical transmembrane segment spans residues 524-544; the sequence is IGGSLYGRFFFMLIIFTFLIL. The Lumenal segment spans residues 545 to 553; sequence SSTSWPRQL. The helical transmembrane segment at 554–574 threads the bilayer; it reads RMVFEYILIFILNSYWIPQIF. The Cytoplasmic segment spans residues 575–602; the sequence is RNAVKGIPSRRERARSSIGGNRSQNKMP. Residues 603–623 form a helical membrane-spanning segment; sequence LLWSFVIGTTIIRSLPVVYVF. Topologically, residues 624 to 635 are lumenal; the sequence is TYSSNVFRHHKD. Residues 636-656 form a helical membrane-spanning segment; that stretch reads VHFVVFLSLWLLFQISILYSQ. The Cytoplasmic portion of the chain corresponds to 657-758; that stretch reads DVLGSRWFLP…PVCRSPLPPL (102 aa). Residues 699–752 form an RING-type; atypical zinc finger; that stretch reads CAICMSDVPIYIEEIPETHKVDQHSYMVTPCNHVFHTSCLENWMNYKLQCPVCR.

As to quaternary structure, component of the DSC E3 ligase complexes composed of at least TUL1, DSC2, DSC3, UBX3, CDC48 as well as VLD1 for the vacuole-localized complex or GLD1 for the Golgi/endosome-localized complex. Interacts with UBC4.

Its subcellular location is the golgi apparatus membrane. The enzyme catalyses S-ubiquitinyl-[E2 ubiquitin-conjugating enzyme]-L-cysteine + [acceptor protein]-L-lysine = [E2 ubiquitin-conjugating enzyme]-L-cysteine + N(6)-ubiquitinyl-[acceptor protein]-L-lysine.. It functions in the pathway protein modification; protein ubiquitination. Catalytic component of the DSC E3 ubiquitin ligase complexes that tag proteins present in Golgi, endosome and vacuole membranes and function in protein homeostasis under non-stress conditions and support a role in protein quality control. Mediates ubiquitination of vacuolar proteins such as CPS1, PPN1, PEP12 and other proteins containing exposed hydrophilic residues within their transmembrane domains, leading to their sorting into internal vesicles in late endosomes. Targets also the unpalmitoylated endosomal SNARE TLG1 to the MVB pathway. In Saccharomyces cerevisiae (strain ATCC 204508 / S288c) (Baker's yeast), this protein is Transmembrane E3 ubiquitin-protein ligase 1 (TUL1).